Reading from the N-terminus, the 140-residue chain is MALERTFSMIKPDATRRNLTGAITKMLEDAGLRVIASKRVWMSKREAEKFYAVHKERPFFSELVEFMSSGPTVVQVLEGENAIAKNREVMGATNPSDAEEGTIRKVHALSIGENSVHGSDSAETAKTEITFWFSEIEIVG.

ATP contacts are provided by Lys11, Phe59, Arg87, Thr93, Arg104, and Asn114. His117 (pros-phosphohistidine intermediate) is an active-site residue.

It belongs to the NDK family. As to quaternary structure, homotetramer. Mg(2+) is required as a cofactor.

It is found in the cytoplasm. It catalyses the reaction a 2'-deoxyribonucleoside 5'-diphosphate + ATP = a 2'-deoxyribonucleoside 5'-triphosphate + ADP. The enzyme catalyses a ribonucleoside 5'-diphosphate + ATP = a ribonucleoside 5'-triphosphate + ADP. Major role in the synthesis of nucleoside triphosphates other than ATP. The ATP gamma phosphate is transferred to the NDP beta phosphate via a ping-pong mechanism, using a phosphorylated active-site intermediate. This is Nucleoside diphosphate kinase from Bartonella tribocorum (strain CIP 105476 / IBS 506).